Reading from the N-terminus, the 116-residue chain is Dynein light chain Tctex-type 3 (116 aa).

Residue tyrosine 4 is modified to 3'-nitrotyrosine.

It belongs to the dynein light chain Tctex-type family. In terms of assembly, homodimer. The cytoplasmic dynein 1 complex consists of two catalytic heavy chains (HCs) and a number of non-catalytic subunits presented by intermediate chains (ICs), light intermediate chains (LICs) and light chains (LCs); the composition seems to vary in respect to the IC, LIC and LC composition. The heavy chain homodimer serves as a scaffold for the probable homodimeric assembly of the respective non-catalytic subunits. The ICs and LICs bind directly to the HC dimer and the LCs assemble on the IC dimer. DYNLT1 and DYNLT3 compete for association with dynein IC (DYNC1I1 or DYNC1I2). Self-associates. Interacts with DYNC1I1 and DYNC1I2. Interacts with BUB3. Interacts with SATB1 in nucleus to form complex with matrix attachment regions (MARs) of DNA.

It localises to the nucleus. The protein resides in the cytoplasm. The protein localises to the cytoskeleton. Its subcellular location is the chromosome. It is found in the centromere. It localises to the kinetochore. In terms of biological role, acts as one of several non-catalytic accessory components of the cytoplasmic dynein 1 complex that are thought to be involved in linking dynein to cargos and to adapter proteins that regulate dynein function. Cytoplasmic dynein 1 acts as a motor for the intracellular retrograde motility of vesicles and organelles along microtubules. Probably binds BUB3 as part of transport cargo. Required for the efficient progression through mitosis. The protein is Dynein light chain Tctex-type 3 (Dynlt3) of Mus musculus (Mouse).